We begin with the raw amino-acid sequence, 309 residues long: Ornithine carbamoyltransferase (309 aa).

Residues Ser-57–Thr-60, Gln-84, Arg-108, and His-135–Gln-138 contribute to the carbamoyl phosphate site. L-ornithine-binding positions include Asn-166, Asp-226, and Ser-230 to Met-231. Carbamoyl phosphate-binding positions include Cys-265–Leu-266 and Arg-293.

This sequence belongs to the aspartate/ornithine carbamoyltransferase superfamily. OTCase family.

Its subcellular location is the cytoplasm. The enzyme catalyses carbamoyl phosphate + L-ornithine = L-citrulline + phosphate + H(+). It functions in the pathway amino-acid biosynthesis; L-arginine biosynthesis; L-arginine from L-ornithine and carbamoyl phosphate: step 1/3. In terms of biological role, reversibly catalyzes the transfer of the carbamoyl group from carbamoyl phosphate (CP) to the N(epsilon) atom of ornithine (ORN) to produce L-citrulline. This chain is Ornithine carbamoyltransferase, found in Rhizorhabdus wittichii (strain DSM 6014 / CCUG 31198 / JCM 15750 / NBRC 105917 / EY 4224 / RW1) (Sphingomonas wittichii).